The following is a 239-amino-acid chain: Cysteine-rich venom protein ENH1 (239 aa).

An N-terminal signal peptide occupies residues 1–18; that stretch reads MIVFILLSLAAVLQQFVA. The SCP domain occupies 37–165; that stretch reads VDMHNSFRRS…PYNYFYVCQY (129 aa). Intrachain disulfides connect Cys-74/Cys-152, Cys-91/Cys-166, Cys-147/Cys-163, Cys-185/Cys-192, Cys-188/Cys-197, Cys-210/Cys-228, and Cys-219/Cys-232. The ShKT domain maps to 201-234; it reads CPITNTFTNCDSLLQQNSCEDSYIKTNCGASCFC.

Belongs to the CRISP family. Expressed by the venom gland.

It is found in the secreted. Functionally, blocks contraction of smooth muscle elicited by high potassium-induced depolarization, but does not block caffeine-stimulated contraction. May target voltage-gated calcium channels on smooth muscle. The polypeptide is Cysteine-rich venom protein ENH1 (Pseudoferania polylepis (Macleay's water snake)).